Consider the following 159-residue polypeptide: SsrA-binding protein (159 aa).

It belongs to the SmpB family.

The protein resides in the cytoplasm. Its function is as follows. Required for rescue of stalled ribosomes mediated by trans-translation. Binds to transfer-messenger RNA (tmRNA), required for stable association of tmRNA with ribosomes. tmRNA and SmpB together mimic tRNA shape, replacing the anticodon stem-loop with SmpB. tmRNA is encoded by the ssrA gene; the 2 termini fold to resemble tRNA(Ala) and it encodes a 'tag peptide', a short internal open reading frame. During trans-translation Ala-aminoacylated tmRNA acts like a tRNA, entering the A-site of stalled ribosomes, displacing the stalled mRNA. The ribosome then switches to translate the ORF on the tmRNA; the nascent peptide is terminated with the 'tag peptide' encoded by the tmRNA and targeted for degradation. The ribosome is freed to recommence translation, which seems to be the essential function of trans-translation. The chain is SsrA-binding protein from Actinobacillus pleuropneumoniae serotype 5b (strain L20).